Here is a 325-residue protein sequence, read N- to C-terminus: WUSCHEL-related homeobox 8 (325 aa).

Positions aspartate 51–leucine 115 form a DNA-binding region, homeobox; WUS-type.

It belongs to the WUS homeobox family. In terms of tissue distribution, expressed only in the egg cell. Not detected in the pollen tube. Expressed in the zygote, the basal cell, and later the suspensor. Expressed in all suspensor cells, except the hypophysis, and in the embryo surrounding region (ESR) endosperm cells. Strongly expressed in the suspensor cells, with a weak expression also detected throughout the developing embryo.

It is found in the nucleus. Its function is as follows. Probable transcription factor, which may be involved in embryonic patterning. May be required for basal embryo development after fertilization. Acts partially redundantly with STIP in promoting embryonic cell division and proliferation. Promotes cotyledon boundary formation by maintaining the symmetry in CUC genes expression domains. The sequence is that of WUSCHEL-related homeobox 8 from Arabidopsis thaliana (Mouse-ear cress).